The following is a 407-amino-acid chain: Dephospho-CoA kinase (407 aa).

In terms of domain architecture, DPCK spans 3-201; that stretch reads RIGLTGGIGA…ERIVPFAHNL (199 aa). Residue 11–16 participates in ATP binding; that stretch reads GAGKSA. Positions 196–407 are UPF0157; sequence PFAHNLSTRQ…DWADSTGWKP (212 aa).

The protein in the N-terminal section; belongs to the CoaE family. This sequence in the C-terminal section; belongs to the UPF0157 (GrpB) family.

It is found in the cytoplasm. The enzyme catalyses 3'-dephospho-CoA + ATP = ADP + CoA + H(+). It participates in cofactor biosynthesis; coenzyme A biosynthesis; CoA from (R)-pantothenate: step 5/5. Functionally, catalyzes the phosphorylation of the 3'-hydroxyl group of dephosphocoenzyme A to form coenzyme A. The sequence is that of Dephospho-CoA kinase from Mycolicibacterium paratuberculosis (strain ATCC BAA-968 / K-10) (Mycobacterium paratuberculosis).